A 399-amino-acid chain; its full sequence is Tryptophan synthase beta chain (399 aa).

Lys92 carries the post-translational modification N6-(pyridoxal phosphate)lysine.

The protein belongs to the TrpB family. Tetramer of two alpha and two beta chains. Pyridoxal 5'-phosphate is required as a cofactor.

It carries out the reaction (1S,2R)-1-C-(indol-3-yl)glycerol 3-phosphate + L-serine = D-glyceraldehyde 3-phosphate + L-tryptophan + H2O. The protein operates within amino-acid biosynthesis; L-tryptophan biosynthesis; L-tryptophan from chorismate: step 5/5. In terms of biological role, the beta subunit is responsible for the synthesis of L-tryptophan from indole and L-serine. The protein is Tryptophan synthase beta chain of Thiobacillus denitrificans (strain ATCC 25259 / T1).